Reading from the N-terminus, the 158-residue chain is Transcription elongation factor GreA (158 aa).

Positions 2 to 70 (ENQKQYPMTQ…IEQDIQRIEH (69 aa)) form a coiled coil.

This sequence belongs to the GreA/GreB family.

Necessary for efficient RNA polymerase transcription elongation past template-encoded arresting sites. The arresting sites in DNA have the property of trapping a certain fraction of elongating RNA polymerases that pass through, resulting in locked ternary complexes. Cleavage of the nascent transcript by cleavage factors such as GreA or GreB allows the resumption of elongation from the new 3'terminus. GreA releases sequences of 2 to 3 nucleotides. The protein is Transcription elongation factor GreA of Staphylococcus epidermidis (strain ATCC 35984 / DSM 28319 / BCRC 17069 / CCUG 31568 / BM 3577 / RP62A).